The primary structure comprises 407 residues: Argininosuccinate synthase (407 aa).

ATP-binding positions include 16-24 (AYSGGLDTS) and alanine 44. Residues tyrosine 96 and serine 101 each contribute to the L-citrulline site. Glycine 126 is an ATP binding site. L-aspartate-binding residues include threonine 128, asparagine 132, and aspartate 133. Asparagine 132 is a binding site for L-citrulline. L-citrulline is bound by residues arginine 136, serine 185, serine 194, glutamate 270, and tyrosine 282.

It belongs to the argininosuccinate synthase family. Type 1 subfamily. As to quaternary structure, homotetramer.

It is found in the cytoplasm. The catalysed reaction is L-citrulline + L-aspartate + ATP = 2-(N(omega)-L-arginino)succinate + AMP + diphosphate + H(+). Its pathway is amino-acid biosynthesis; L-arginine biosynthesis; L-arginine from L-ornithine and carbamoyl phosphate: step 2/3. The polypeptide is Argininosuccinate synthase (Shewanella sp. (strain W3-18-1)).